An 827-amino-acid polypeptide reads, in one-letter code: MSSKQATSPFACTADGEEAMTQDLTSREKEEGSDQHPASHLPLHPIMHNKPHSEELPTLVSTIQQDADWDSVLSSQQRMESENNKLCSLYSFRNTSTSPHKPDEGSREREIMNSVTFGTPERRKGSLADVVDTLKQKKLEEMTRTEQEDSSCMEKLLSKDWKEKMERLNTSELLGEIKGTPESLAEKERQLSTMITQLISLREQLLAAHDEQKKLAASQIEKQRQQMDLARQQQEQIARQQQQLLQQQHKINLLQQQIQVQGHMPPLMIPIFPHDQRTLAAAAAAQQGFLFPPGITYKPGDNYPVQFIPSTMAAAAASGLSPLQLQKGHVSHPQINPRLKGISDRFGRNLDPSEHGGGHSYNHRQIEQLYAAQLASMQVSPGAKMPSTPQPPNSAGAVSPTGIKNEKRGTSPVTQVKDETTAQPLNLSSRPKTAEPVKSPTSPTQNLFPASKTSPVNLPNKSSIPSPIGGSLGRGSSLDILSSLNSPALFGDQDTVMKAIQEARKMREQIQREQQQQPHGVDGKLSSMNNMGLSNCRTEKERTRFENLGPQLTGKSSEDGKLGPGVIDLTRPEDAEGSKAMNGSAAKLQQYYCWPTGGATVAEARVYRDARGRASSEPHIKRPMNAFMVWAKDERRKILQAFPDMHNSNISKILGSRWKSMSNQEKQPYYEEQARLSKIHLEKYPNYKYKPRPKRTCIVDGKKLRIGEYKQLMRSRRQEMRQFFTVGQQPQMPITTGTGVVYPGAITMATTTPSPQMTSDCSSTSASPEPSLPVIQSTYGMKMDGASLAGNDMINGEDEMEAYDDYEDDPKSDYSSENEAPEPVSAN.

Residues 1 to 10 show a composition bias toward polar residues; sequence MSSKQATSPF. Residues 1-51 are disordered; it reads MSSKQATSPFACTADGEEAMTQDLTSREKEEGSDQHPASHLPLHPIMHNKP. A compositionally biased stretch (basic and acidic residues) spans 25 to 34; sequence TSREKEEGSD. The residue at position 119 (threonine 119) is a Phosphothreonine. The stretch at 184–262 forms a coiled coil; the sequence is LAEKERQLST…LLQQQIQVQG (79 aa). Disordered regions lie at residues 334–361 and 379–470; these read QINP…GHSY and VSPG…PIGG. The segment covering 341-357 has biased composition (basic and acidic residues); sequence GISDRFGRNLDPSEHGG. The residue at position 399 (serine 399) is a Phosphoserine. Phosphothreonine is present on threonine 401. Glycyl lysine isopeptide (Lys-Gly) (interchain with G-Cter in SUMO) cross-links involve residues lysine 404 and lysine 417. 2 stretches are compositionally biased toward polar residues: residues 421 to 431 and 439 to 461; these read TAQPLNLSSRP and SPTS…LPNK. Phosphoserine is present on residues serine 439 and serine 442. The HMG box DNA-binding region spans 620 to 688; the sequence is IKRPMNAFMV…IHLEKYPNYK (69 aa). Disordered stretches follow at residues 752–772 and 786–827; these read TPSP…EPSL and ASLA…VSAN. The segment covering 795–808 has biased composition (acidic residues); it reads NGEDEMEAYDDYED.

Homodimer. Interacts with DAZAP2. May interact with CENPK. In terms of processing, sumoylation inhibits the transcriptional activity. Highly expressed in testis.

It localises to the nucleus. The protein localises to the cytoplasm. Transcription factor that plays a key role in several developmental processes, including neurogenesis, chondrocytes differentiation and cartilage formation. Specifically binds the 5'-AACAAT-3' DNA motif present in enhancers and super-enhancers and promotes expression of genes important for chondrogenesis. Required for overt chondrogenesis when condensed prechondrocytes differentiate into early stage chondrocytes: SOX5 and SOX6 cooperatively bind with SOX9 on active enhancers and super-enhancers associated with cartilage-specific genes, and thereby potentiate SOX9's ability to transactivate. Not involved in precartilaginous condensation, the first step in chondrogenesis, during which skeletal progenitors differentiate into prechondrocytes. Together with SOX5, required to form and maintain a pool of highly proliferating chondroblasts between epiphyses and metaphyses, to form columnar chondroblasts, delay chondrocyte prehypertrophy but promote hypertrophy, and to delay terminal differentiation of chondrocytes on contact with ossification fronts. Binds to the proximal promoter region of the myelin protein MPZ gene, and is thereby involved in the differentiation of oligodendroglia in the developing spinal tube. Binds to the gene promoter of MBP and acts as a transcriptional repressor. The chain is Transcription factor SOX-6 from Mus musculus (Mouse).